The chain runs to 574 residues: 4-oxocyclohexanecarboxylate 2-dehydrogenase (574 aa).

Belongs to the FAD-dependent oxidoreductase 2 family. Monomer. Homodimer. FAD is required as a cofactor.

The catalysed reaction is 4-oxocyclohexane-1-carboxylate + O2 = 4-oxocyclohex-2-ene-1-carboxylate + H2O2. Its activity is regulated as follows. Inhibited by 5,5'-dithio-bis(2- nitrobenzoate) and N-bromosuccinimide, but not by thiol and chelating reagents. Functionally, desaturase involved in a cyclohexanecarboxylate (CHCA) degradation pathway. Catalyzes the conversion of 4-oxocyclohexanecarboxylate (4-oxoCHCA) to 4-oxocyclohexenecarboxylate. Is highly specific for 4-oxocyclohexanecarboxylic acid and shows only slight activity with 4-oxo-2-methylcyclohex-2-enecarboxylic acid. The protein is 4-oxocyclohexanecarboxylate 2-dehydrogenase of Sinomonas cyclohexanicum (Corynebacterium cyclohexanicum).